The sequence spans 83 residues: Small ribosomal subunit protein bS16c (83 aa).

Belongs to the bacterial ribosomal protein bS16 family.

It is found in the plastid. The protein resides in the chloroplast. This chain is Small ribosomal subunit protein bS16c, found in Chaetosphaeridium globosum (Charophycean green alga).